Reading from the N-terminus, the 251-residue chain is Imidazole glycerol phosphate synthase subunit HisF (251 aa).

Catalysis depends on residues Asp11 and Asp130.

This sequence belongs to the HisA/HisF family. In terms of assembly, heterodimer of HisH and HisF.

Its subcellular location is the cytoplasm. The catalysed reaction is 5-[(5-phospho-1-deoxy-D-ribulos-1-ylimino)methylamino]-1-(5-phospho-beta-D-ribosyl)imidazole-4-carboxamide + L-glutamine = D-erythro-1-(imidazol-4-yl)glycerol 3-phosphate + 5-amino-1-(5-phospho-beta-D-ribosyl)imidazole-4-carboxamide + L-glutamate + H(+). The protein operates within amino-acid biosynthesis; L-histidine biosynthesis; L-histidine from 5-phospho-alpha-D-ribose 1-diphosphate: step 5/9. IGPS catalyzes the conversion of PRFAR and glutamine to IGP, AICAR and glutamate. The HisF subunit catalyzes the cyclization activity that produces IGP and AICAR from PRFAR using the ammonia provided by the HisH subunit. In Chlorobium phaeobacteroides (strain DSM 266 / SMG 266 / 2430), this protein is Imidazole glycerol phosphate synthase subunit HisF.